Consider the following 66-residue polypeptide: MSQAVKQAYREVLKLVKRLPPPSRGYYAQYARENFVTYSEVEDPESIRSLLARVHHHTCWVLKKVR.

Belongs to the complex I LYR family. LYRM9 subfamily.

This Physcomitrium patens (Spreading-leaved earth moss) protein is LYR motif-containing protein PHYPADRAFT_186863.